The chain runs to 157 residues: MGRFISVSFGLLVVFLSLSGTGADFDCPSDWTAYDQHCYLAIGEPQNWYEAERFCTEQAKDGHLVSIQSREEGNFVAQLVSGFMHRSEIYVWIGLRDRREEQQCNPEWNDGSKIIYVNWKEGESKMCQGLTKWTNFHDWNNINCEDLYPFVCKFSAV.

The signal sequence occupies residues 1–23 (MGRFISVSFGLLVVFLSLSGTGA). Disulfide bonds link C27–C38, C55–C152, and C127–C144. Residues 34–153 (YDQHCYLAIG…CEDLYPFVCK (120 aa)) form the C-type lectin domain.

The protein belongs to the snaclec family. In terms of assembly, heterodimer of subunits A and B; disulfide-linked. As to expression, expressed by the venom gland.

Its subcellular location is the secreted. EMS16 is a potent and selective inhibitor of alpha-2/beta-1 (ITGA2/ITGB1) integrin and acts as a potent antagonist of platelet aggregation and cell migration. Binds specifically to the I domain of the alpha-2 subunit, in a metal ion-independent fashion. The polypeptide is Snaclec EMS16 subunit alpha (Echis multisquamatus (Central Asian sand viper)).